The following is a 353-amino-acid chain: Photosystem II D2 protein (353 aa).

T2 carries the post-translational modification N-acetylthreonine. Position 2 is a phosphothreonine (T2). Residues 41–61 (CAYFALGGWFTGTTFVTSWYT) traverse the membrane as a helical segment. H118 serves as a coordination point for chlorophyll a. Residues 125-141 (GFMLRQFELARSVQLRP) form a helical membrane-spanning segment. Residues Q130 and N143 each coordinate pheophytin a. Residues 153–166 (VFVSVFLIYPLGQS) form a helical membrane-spanning segment. Chlorophyll a is bound at residue H198. The helical transmembrane segment at 208–228 (AALLCAIHGATVENTLFEDGD) threads the bilayer. Positions 215 and 262 each coordinate a plastoquinone. H215 is a binding site for Fe cation. H269 provides a ligand contact to Fe cation. A helical membrane pass occupies residues 279-295 (GLWMSAIGVVGLALNLR).

The protein belongs to the reaction center PufL/M/PsbA/D family. As to quaternary structure, PSII is composed of 1 copy each of membrane proteins PsbA, PsbB, PsbC, PsbD, PsbE, PsbF, PsbH, PsbI, PsbJ, PsbK, PsbL, PsbM, PsbT, PsbX, PsbY, PsbZ, Psb30/Ycf12, at least 3 peripheral proteins of the oxygen-evolving complex and a large number of cofactors. It forms dimeric complexes. It depends on The D1/D2 heterodimer binds P680, chlorophylls that are the primary electron donor of PSII, and subsequent electron acceptors. It shares a non-heme iron and each subunit binds pheophytin, quinone, additional chlorophylls, carotenoids and lipids. There is also a Cl(-1) ion associated with D1 and D2, which is required for oxygen evolution. The PSII complex binds additional chlorophylls, carotenoids and specific lipids. as a cofactor.

The protein localises to the plastid. It localises to the chloroplast thylakoid membrane. The catalysed reaction is 2 a plastoquinone + 4 hnu + 2 H2O = 2 a plastoquinol + O2. Its function is as follows. Photosystem II (PSII) is a light-driven water:plastoquinone oxidoreductase that uses light energy to abstract electrons from H(2)O, generating O(2) and a proton gradient subsequently used for ATP formation. It consists of a core antenna complex that captures photons, and an electron transfer chain that converts photonic excitation into a charge separation. The D1/D2 (PsbA/PsbD) reaction center heterodimer binds P680, the primary electron donor of PSII as well as several subsequent electron acceptors. D2 is needed for assembly of a stable PSII complex. The sequence is that of Photosystem II D2 protein from Agrostis stolonifera (Creeping bentgrass).